A 393-amino-acid polypeptide reads, in one-letter code: Arginine biosynthesis bifunctional protein ArgJ (393 aa).

Substrate-binding residues include threonine 143, lysine 168, threonine 179, glutamate 265, asparagine 388, and threonine 393. The Nucleophile role is filled by threonine 179.

It belongs to the ArgJ family. In terms of assembly, heterotetramer of two alpha and two beta chains.

Its subcellular location is the cytoplasm. It carries out the reaction N(2)-acetyl-L-ornithine + L-glutamate = N-acetyl-L-glutamate + L-ornithine. It catalyses the reaction L-glutamate + acetyl-CoA = N-acetyl-L-glutamate + CoA + H(+). It functions in the pathway amino-acid biosynthesis; L-arginine biosynthesis; L-ornithine and N-acetyl-L-glutamate from L-glutamate and N(2)-acetyl-L-ornithine (cyclic): step 1/1. The protein operates within amino-acid biosynthesis; L-arginine biosynthesis; N(2)-acetyl-L-ornithine from L-glutamate: step 1/4. Its function is as follows. Catalyzes two activities which are involved in the cyclic version of arginine biosynthesis: the synthesis of N-acetylglutamate from glutamate and acetyl-CoA as the acetyl donor, and of ornithine by transacetylation between N(2)-acetylornithine and glutamate. This Syntrophotalea carbinolica (strain DSM 2380 / NBRC 103641 / GraBd1) (Pelobacter carbinolicus) protein is Arginine biosynthesis bifunctional protein ArgJ.